A 666-amino-acid polypeptide reads, in one-letter code: MKTIHKLFLGLCLPATLGPLLGIVVTNTDQSIKFTSKSNSINKNNQNKELALLRDNLMNEAKVDEPLSFEKRFENFKNKYSDIHSLNNSVFSLHDVYDLLGGFKQSLTTFFDEVIAQQQKIKDADKIFPSTKDNPPKEENPNVLDTLANYQGAGFFPSLGKNGFNLPEAVFQNFTDFRINDYKIKNFNVDLVSENDIIKHDKVRYAFEVKFNIALVLSINKSNVDFDFDFILKTDNFSDIENFNEIFNRKPALQFRFYTKINVHKLSFNGSDSTYIANILLQDQFNLLEIDLNKSIYALDLENAKERFDKEFVQPLYQKRREAKLAWEEEQRRIAEEQRRQEEERARILKELKEKAEKDKRVKEAQNNLQKALGNLDTFFNFFSSGQDRVLLGFDPNKYNVQTREGLFKALQISYSNFKTWTFYISLLGWKEGSVKLLKKPIWNALRDDKAFQYAFGLGPNTSEQQLGRVTLPGYGYEGIRMSDWLRWALGYYTSFTLSPPKNVEANLIGDANDKKHIWISPHTFKLNREYGDGERFKGKAYRFKLSISFELEGHLTAHWWTIAFRGSIPGSWSGKLRVTHEFDGDVPYYRLHTTPPQYRLTDDMKLLFVPHSIQRVTAVGNESINGLLRSQNLHNLERQSYEATAPIDLISYMLYAISDKKPPQK.

The protein belongs to the MG032/MG096/MG288 family.

This is an uncharacterized protein from Mycoplasma genitalium (strain ATCC 33530 / DSM 19775 / NCTC 10195 / G37) (Mycoplasmoides genitalium).